A 65-amino-acid polypeptide reads, in one-letter code: MFTLKKSLLLLFFIGVIKLSLCEEERNADDDERRDDPDEMDVEVENRSAVGRHGRRFGLRKHRKH.

An N-terminal signal peptide occupies residues 1–22 (MFTLKKSLLLLFFIGVIKLSLC). A propeptide spanning residues 23–47 (EEERNADDDERRDDPDEMDVEVENR) is cleaved from the precursor. The span at 26-43 (RNADDDERRDDPDEMDVE) shows a compositional bias: acidic residues. The interval 26–65 (RNADDDERRDDPDEMDVEVENRSAVGRHGRRFGLRKHRKH) is disordered. Residues 50 to 65 (VGRHGRRFGLRKHRKH) show a composition bias toward basic residues.

Belongs to the frog skin active peptide (FSAP) family. Brevinin subfamily. In terms of tissue distribution, expressed by the skin glands.

Its subcellular location is the secreted. Antimicrobial peptide. Has activity against the Gram-positive bacterium S.aureus (MIC=6 uM) and the Gram-negative bacterium E.coli (MIC=3 uM). Lacks hemolytic activity against human erythrocytes. This is Dybowskin-2CDYa from Rana dybowskii (Dybovsky's frog).